The chain runs to 295 residues: Homeobox protein XHOX-7.1 (295 aa).

Disordered stretches follow at residues 75-115 (RKPG…PISL) and 134-175 (KPES…KPRT). Residues 84-97 (SSPTGSPLAGTSHS) show a composition bias toward polar residues. Over residues 141-153 (SSWIQSPSFSPSP) the composition is skewed to low complexity. Over residues 164 to 174 (LRKHKTNRKPR) the composition is skewed to basic residues. The homeobox DNA-binding region spans 170-229 (NRKPRTPFTTSQLLALERKFRQKQYLSIAERAEFSSSLNLTETQVKIWFQNRRAKAKRLQ).

It belongs to the Msh homeobox family.

The protein localises to the nucleus. This chain is Homeobox protein XHOX-7.1, found in Xenopus laevis (African clawed frog).